An 821-amino-acid chain; its full sequence is MVDKDANNELDSIPLVSEQVTNGENGELNIKASESTVGSNGAVADHEESETNNQTAVDNTENDTLDKDKLDAQPNHNEQQREADLSDAFSVKIQDESVNDKTSEPDENKDTASRKSMDGILNLSENNLDATKPEASEQELNPSLHNLMSACQQGDLTKVSELISNGEVKANDTFSDGITALHWAAINNRLTIVKYLIENDHSKADPNLLGGELKASPLHWACRNGLVYIVDYFIVHTDADPTLRDSQSYNALHLAVHSSNITLIIYLLLSCCGSTSTSKQLYVDESDNCDRTSLHWAAYQGDLLTINALLKFGADVSKIDKNLFIPLHWAFMKGYKTVLKVLAGAGSNIFAKNDQGKDSFEVAKDMNCYDTWIKVLKECGRNPKNHWEMKTIYLNPKIGKLVTFFTPYIILPIMFQVCSFYNGFVIPKLFFSVVLFAGSIYILQKLVIPTYLAEEKAIPKSPLLAGIFSGTAFWCIVTWAFNIIPTLLFKKFISNLVLSAFIYLFVWSFFKAMFINPGYVPVPSDNSVTLDQVKDLIKIGRFDTDNFCVNTFVRKPLRSKYSRFNKKLIARFDHYCPWVYNDIGVRNHKLFVVFVYSLNLAVLLFTHLSIKLFKNTEKMSGYDSDDESQKCWLLSDELCVGYKSHHFQFNLMLWCLIQYIWIAFLCLVQTFQILKGLTTWEFSSLNNRLQTHNGYNHSTLPKDFDLTSSNTNRYNSPKQSNGLSICLKLIGLDQVVLAIKLGIKSIFSHTSSVETYDPLNEFEIPTDYGFRTNWLDFWFIGDIEWRNIFYLPIEGENNLNRTVVDYYKLYEYPPKLADVDA.

The tract at residues 1–118 (MVDKDANNEL…KDTASRKSMD (118 aa)) is disordered. At 1–400 (MVDKDANNEL…TIYLNPKIGK (400 aa)) the chain is on the cytoplasmic side. Residues 93-117 (IQDESVNDKTSEPDENKDTASRKSM) show a composition bias toward basic and acidic residues. 6 ANK repeats span residues 142-172 (PSLH…KAND), 176-205 (DGIT…SKAD), 213-243 (LKAS…DPTL), 247-277 (QSYN…STST), 289-318 (CDRT…DVSK), and 322-351 (NLFI…NIFA). A helical transmembrane segment spans residues 401–421 (LVTFFTPYIILPIMFQVCSFY). Residue Asn422 is a topological domain, lumenal. Residues 423-443 (GFVIPKLFFSVVLFAGSIYIL) form a helical membrane-spanning segment. Topologically, residues 444–463 (QKLVIPTYLAEEKAIPKSPL) are cytoplasmic. A helical transmembrane segment spans residues 464-484 (LAGIFSGTAFWCIVTWAFNII). Residues 485 to 494 (PTLLFKKFIS) are Lumenal-facing. The helical transmembrane segment at 495 to 515 (NLVLSAFIYLFVWSFFKAMFI) threads the bilayer. Over 516–589 (NPGYVPVPSD…YNDIGVRNHK (74 aa)) the chain is Cytoplasmic. The DHHC domain maps to 546 to 596 (NFCVNTFVRKPLRSKYSRFNKKLIARFDHYCPWVYNDIGVRNHKLFVVFVY). Cys576 serves as the catalytic S-palmitoyl cysteine intermediate. The helical transmembrane segment at 590 to 610 (LFVVFVYSLNLAVLLFTHLSI) threads the bilayer. Topologically, residues 611-650 (KLFKNTEKMSGYDSDDESQKCWLLSDELCVGYKSHHFQFN) are lumenal. The chain crosses the membrane as a helical span at residues 651–671 (LMLWCLIQYIWIAFLCLVQTF). At 672–821 (QILKGLTTWE…YPPKLADVDA (150 aa)) the chain is on the cytoplasmic side.

It belongs to the DHHC palmitoyltransferase family. AKR/ZDHHC17 subfamily.

It localises to the early endosome membrane. The protein localises to the golgi apparatus membrane. The enzyme catalyses L-cysteinyl-[protein] + hexadecanoyl-CoA = S-hexadecanoyl-L-cysteinyl-[protein] + CoA. Its function is as follows. Palmitoyltransferase specific for casein kinase 1. The sequence is that of Palmitoyltransferase AKR1 (AKR1) from Debaryomyces hansenii (strain ATCC 36239 / CBS 767 / BCRC 21394 / JCM 1990 / NBRC 0083 / IGC 2968) (Yeast).